The following is a 261-amino-acid chain: Enolase-phosphatase E1 (261 aa).

Mg(2+) is bound by residues aspartate 16 and glutamate 18. Substrate is bound by residues 153–154 (SS) and lysine 187. Mg(2+) is bound at residue aspartate 212.

The protein belongs to the HAD-like hydrolase superfamily. MasA/MtnC family. Monomer. Mg(2+) serves as cofactor.

Its subcellular location is the cytoplasm. It localises to the nucleus. It catalyses the reaction 5-methylsulfanyl-2,3-dioxopentyl phosphate + H2O = 1,2-dihydroxy-5-(methylsulfanyl)pent-1-en-3-one + phosphate. It participates in amino-acid biosynthesis; L-methionine biosynthesis via salvage pathway; L-methionine from S-methyl-5-thio-alpha-D-ribose 1-phosphate: step 3/6. Its pathway is amino-acid biosynthesis; L-methionine biosynthesis via salvage pathway; L-methionine from S-methyl-5-thio-alpha-D-ribose 1-phosphate: step 4/6. Bifunctional enzyme that catalyzes the enolization of 2,3-diketo-5-methylthiopentyl-1-phosphate (DK-MTP-1-P) into the intermediate 2-hydroxy-3-keto-5-methylthiopentenyl-1-phosphate (HK-MTPenyl-1-P), which is then dephosphorylated to form the acireductone 1,2-dihydroxy-3-keto-5-methylthiopentene (DHK-MTPene). The sequence is that of Enolase-phosphatase E1 from Homo sapiens (Human).